A 299-amino-acid chain; its full sequence is Pyridoxal 5'-phosphate synthase subunit PdxS (299 aa).

Residue Asp24 coordinates D-ribose 5-phosphate. The active-site Schiff-base intermediate with D-ribose 5-phosphate is Lys81. D-ribose 5-phosphate is bound at residue Gly153. Arg165 serves as a coordination point for D-glyceraldehyde 3-phosphate. D-ribose 5-phosphate-binding positions include Gly219 and 240–241 (GS).

It belongs to the PdxS/SNZ family. In terms of assembly, in the presence of PdxT, forms a dodecamer of heterodimers.

It catalyses the reaction aldehydo-D-ribose 5-phosphate + D-glyceraldehyde 3-phosphate + L-glutamine = pyridoxal 5'-phosphate + L-glutamate + phosphate + 3 H2O + H(+). Its pathway is cofactor biosynthesis; pyridoxal 5'-phosphate biosynthesis. Catalyzes the formation of pyridoxal 5'-phosphate from ribose 5-phosphate (RBP), glyceraldehyde 3-phosphate (G3P) and ammonia. The ammonia is provided by the PdxT subunit. Can also use ribulose 5-phosphate and dihydroxyacetone phosphate as substrates, resulting from enzyme-catalyzed isomerization of RBP and G3P, respectively. The polypeptide is Pyridoxal 5'-phosphate synthase subunit PdxS (Methanococcus maripaludis (strain C6 / ATCC BAA-1332)).